The sequence spans 141 residues: Hemoglobin subunit alpha (141 aa).

The Globin domain occupies 1–141 (VLSANDKANV…VSTVLTSKYR (141 aa)). S3 carries the phosphoserine modification. 2 positions are modified to N6-succinyllysine: K7 and K11. Position 16 is an N6-acetyllysine; alternate (K16). K16 carries the N6-succinyllysine; alternate modification. Position 24 is a phosphotyrosine (Y24). S35 bears the Phosphoserine mark. K40 carries the post-translational modification N6-succinyllysine. Position 49 is a phosphoserine (S49). An O2-binding site is contributed by H58. H87 provides a ligand contact to heme b. A Phosphoserine modification is found at S102. T108 carries the post-translational modification Phosphothreonine. Phosphoserine occurs at positions 124 and 131. Phosphothreonine is present on residues T134 and T137. S138 carries the phosphoserine modification.

This sequence belongs to the globin family. In terms of assembly, heterotetramer of two alpha chains and two beta chains. In terms of tissue distribution, red blood cells.

Involved in oxygen transport from the lung to the various peripheral tissues. Functionally, hemopressin acts as an antagonist peptide of the cannabinoid receptor CNR1. Hemopressin-binding efficiently blocks cannabinoid receptor CNR1 and subsequent signaling. The chain is Hemoglobin subunit alpha (HBA) from Suncus murinus (Asian house shrew).